The following is a 364-amino-acid chain: Transposase for insertion sequence element IS1111A (364 aa).

Belongs to the transposase IS1111A/IS1328/IS1533 family.

Its function is as follows. Required for the transposition of the insertion element. This chain is Transposase for insertion sequence element IS1111A, found in Coxiella burnetii (strain RSA 493 / Nine Mile phase I).